The sequence spans 355 residues: NAD-dependent protein deacylase sirtuin-6 (355 aa).

Ser2 is modified (N-acetylserine). Ser10 carries the post-translational modification Phosphoserine. The region spanning 27–272 is the Deacetylase sirtuin-type domain; that stretch reads PEELERKVWE…TRLMKHLGLE (246 aa). N6-acetyllysine is present on Lys33. The NAD(+) site is built by Ala53, Thr57, Phe64, Arg65, Trp71, Gln113, and His133. The Proton acceptor role is filled by His133. Cys141, Cys144, and Cys166 together coordinate Zn(2+). Residue Lys170 forms a Glycyl lysine isopeptide (Lys-Gly) (interchain with G-Cter in ubiquitin) linkage. Cys177 is a Zn(2+) binding site. Residues Gly214, Ser216, Asn240, Gln242, and Val258 each coordinate NAD(+). The interval 284-355 is disordered; the sequence is RALPPLPRPP…KRVKAEAVPS (72 aa). Over residues 287 to 296 the composition is skewed to pro residues; that stretch reads PPLPRPPTPK. Thr294 carries the phosphothreonine modification. Phosphoserine is present on residues Ser303 and Ser330.

This sequence belongs to the sirtuin family. Class IV subfamily. As to quaternary structure, homodimer; binds to nucleosomes and DNA ends as a homodimer. Interacts with RELA; interferes with RELA binding to target DNA. Interacts with SMARCA5; promoting recruitment of SMARCA5/SNF2H to double-strand breaks (DSBs) sites. Interacts with the mTORC2 complex; preventing the ability of SIRT6 to deacetylate FOXO1. Interacts with the CLOCK-BMAL1 complex; recruited by the CLOCK-BMAL1 complex to regulate expression of clock-controlled genes. Interacts with CSNK2A2; preventing CSNK2A2 localization to the nucleus. In terms of processing, acetylated at Lys-33. Deacetylation at Lys-33 by SIRT1 promotes homomultimerization and binding to double-strand breaks (DSBs) sites. Phosphorylation at Ser-10 by MAPK8/JNK1 in response to oxidative stress stimulates the mono-ADP-ribosyltransferase activity on PARP1, leading to PARP1 recruitment to double-strand breaks (DSBs). Post-translationally, monoubiquitinated at Lys-170 by STUB1/CHIP, preventing its degradation by the proteasome. In terms of processing, sumoylated, leading to specifically decrease ability to deacetylate histone H3 at 'Lys-56' (H3K56ac).

The protein localises to the nucleus. It localises to the chromosome. It is found in the telomere. Its subcellular location is the endoplasmic reticulum. It catalyses the reaction N(6)-acetyl-L-lysyl-[protein] + NAD(+) + H2O = 2''-O-acetyl-ADP-D-ribose + nicotinamide + L-lysyl-[protein]. It carries out the reaction N(6)-tetradecanoyl-L-lysyl-[protein] + NAD(+) + H2O = 2''-O-tetradecanoyl-ADP-D-ribose + nicotinamide + L-lysyl-[protein]. The catalysed reaction is N(6)-hexadecanoyl-L-lysyl-[protein] + NAD(+) + H2O = 2''-O-hexadecanoyl-ADP-D-ribose + nicotinamide + L-lysyl-[protein]. The enzyme catalyses L-lysyl-[protein] + NAD(+) = N(6)-(ADP-D-ribosyl)-L-lysyl-[protein] + nicotinamide + H(+). It catalyses the reaction L-arginyl-[protein] + NAD(+) = N(omega)-(ADP-D-ribosyl)-L-arginyl-[protein] + nicotinamide + H(+). With respect to regulation, compared to the defatty-acylase activity, the protein deacetylase activity is weak in vitro, and requires activation. The histone deacetylase activity is strongly activated upon binding to nucleosomes and chromatin in vivo. Two molecules of SIRT6 associate with the acidic patch of one nucleosome, while the C-terminal disordered region of SIRT6 associates with nucleosomal DNA, leading to efficient histone deacetylation. The protein-lysine deacetylase activity is also activated by long-chain free fatty-acids. Functionally, NAD-dependent protein deacetylase, deacylase and mono-ADP-ribosyltransferase that plays an essential role in DNA damage repair, telomere maintenance, metabolic homeostasis, inflammation, tumorigenesis and aging. Displays protein-lysine deacetylase or defatty-acylase (demyristoylase and depalmitoylase) activity, depending on the context. Acts as a key histone deacetylase by catalyzing deacetylation of histone H3 at 'Lys-9', 'Lys-18' and 'Lys-56' (H3K9ac, H3K18ac and H3K56ac, respectively), suppressing target gene expression of several transcription factors, including NF-kappa-B. Acts as an inhibitor of transcription elongation by mediating deacetylation of H3K9ac and H3K56ac, preventing release of NELFE from chromatin and causing transcriptional pausing. Involved in DNA repair by promoting double-strand break (DSB) repair: acts as a DSB sensor by recognizing and binding DSB sites, leading to (1) recruitment of DNA repair proteins, such as SMARCA5/SNF2H, and (2) deacetylation of histone H3K9ac and H3K56ac. SIRT6 participation to DSB repair is probably involved in extension of life span. Also promotes DNA repair by deacetylating non-histone proteins, such as DDB2 and p53/TP53. Specifically deacetylates H3K18ac at pericentric heterochromatin, thereby maintaining pericentric heterochromatin silencing at centromeres and protecting against genomic instability and cellular senescence. Involved in telomere maintenance by catalyzing deacetylation of histone H3 in telomeric chromatin, regulating telomere position effect and telomere movement in response to DNA damage. Required for embryonic stem cell differentiation by mediating histone deacetylation of H3K9ac. Plays a major role in metabolism by regulating processes such as glycolysis, gluconeogenesis, insulin secretion and lipid metabolism. Inhibits glycolysis via histone deacetylase activity and by acting as a corepressor of the transcription factor HIF1A, thereby controlling the expression of multiple glycolytic genes. Has tumor suppressor activity by repressing glycolysis, thereby inhibiting the Warburg effect. Also regulates glycolysis and tumorigenesis by mediating deacetylation and nuclear export of non-histone proteins, such as isoform M2 of PKM (PKM2). Acts as a negative regulator of gluconeogenesis by mediating deacetylation of non-histone proteins, such as FOXO1 and KAT2A/GCN5. Promotes beta-oxidation of fatty acids during fasting by catalyzing deacetylation of NCOA2, inducing coactivation of PPARA. Acts as a regulator of lipid catabolism in brown adipocytes, both by catalyzing deacetylation of histones and non-histone proteins, such as FOXO1. Also acts as a regulator of circadian rhythms, both by regulating expression of clock-controlled genes involved in lipid and carbohydrate metabolism, and by catalyzing deacetylation of PER2. The defatty-acylase activity is specifically involved in regulation of protein secretion. Has high activity toward long-chain fatty acyl groups and mediates protein-lysine demyristoylation and depalmitoylation of target proteins, such as RRAS2 and TNF, thereby regulating their secretion. Also acts as a mono-ADP-ribosyltransferase by mediating mono-ADP-ribosylation of PARP1, TRIM28/KAP1 or SMARCC2/BAF170. Mono-ADP-ribosyltransferase activity is involved in DNA repair, cellular senescence, repression of LINE-1 retrotransposon elements and regulation of transcription. This chain is NAD-dependent protein deacylase sirtuin-6, found in Macaca fascicularis (Crab-eating macaque).